A 182-amino-acid polypeptide reads, in one-letter code: Glutathione-regulated potassium-efflux system ancillary protein KefG (182 aa).

The protein belongs to the NAD(P)H dehydrogenase (quinone) family. KefG subfamily. In terms of assembly, interacts with KefB.

It is found in the cell inner membrane. The catalysed reaction is a quinone + NADH + H(+) = a quinol + NAD(+). It catalyses the reaction a quinone + NADPH + H(+) = a quinol + NADP(+). Regulatory subunit of a potassium efflux system that confers protection against electrophiles. Required for full activity of KefB. This Yersinia pestis bv. Antiqua (strain Nepal516) protein is Glutathione-regulated potassium-efflux system ancillary protein KefG.